We begin with the raw amino-acid sequence, 347 residues long: uncharacterized protein (347 aa).

Coiled-coil stretches lie at residues 148 to 201 (DQQS…EKDG) and 261 to 298 (LENLTFRLNLINDLNKKEEEKEKEKEKEKEENSFDTFS). The disordered stretch occupies residues 151–203 (SISNLRKEEKEKQKENENENENENENENENEKENQELDKKVNQTNDNEKDGDE). Basic and acidic residues predominate over residues 155 to 167 (LRKEEKEKQKENE). The span at 168-178 (NENENENENEN) shows a compositional bias: acidic residues. A compositionally biased stretch (basic and acidic residues) spans 179 to 191 (ENEKENQELDKKV).

This is an uncharacterized protein from Dictyostelium discoideum (Social amoeba).